We begin with the raw amino-acid sequence, 113 residues long: UPF0122 protein LCA_0713 (113 aa).

It belongs to the UPF0122 family.

Might take part in the signal recognition particle (SRP) pathway. This is inferred from the conservation of its genetic proximity to ftsY/ffh. May be a regulatory protein. The sequence is that of UPF0122 protein LCA_0713 from Latilactobacillus sakei subsp. sakei (strain 23K) (Lactobacillus sakei subsp. sakei).